Here is a 99-residue protein sequence, read N- to C-terminus: Apolipoprotein C-III (99 aa).

The first 20 residues, 1–20 (MQPRTLLTVALLALLASARA), serve as a signal peptide directing secretion. Met-63 is subject to Methionine sulfoxide. The lipid-binding stretch occupies residues 68-99 (RFLKGYWSKFTDKFTGFWDSNPEDQPTPAIES). Thr-94 is a glycosylation site (O-linked (GalNAc...) threonine).

This sequence belongs to the apolipoprotein C3 family. In terms of processing, the most abundant glycoforms are characterized by an O-linked disaccharide galactose linked to N-acetylgalactosamine (Gal-GalNAc), further modified with up to 3 sialic acid residues. Less abundant glycoforms are characterized by more complex and fucosylated glycan moieties. O-glycosylated on Thr-94 with a core 1 or possibly core 8 glycan.

It localises to the secreted. Functionally, component of triglyceride-rich very low density lipoproteins (VLDL) and high density lipoproteins (HDL) in plasma. Plays a multifaceted role in triglyceride homeostasis. Intracellularly, promotes hepatic very low density lipoprotein 1 (VLDL1) assembly and secretion; extracellularly, attenuates hydrolysis and clearance of triglyceride-rich lipoproteins (TRLs). Impairs the lipolysis of TRLs by inhibiting lipoprotein lipase and the hepatic uptake of TRLs by remnant receptors. Formed of several curved helices connected via semiflexible hinges, so that it can wrap tightly around the curved micelle surface and easily adapt to the different diameters of its natural binding partners. In Mus musculus (Mouse), this protein is Apolipoprotein C-III (Apoc3).